Consider the following 113-residue polypeptide: Prefoldin subunit beta (113 aa).

This sequence belongs to the prefoldin subunit beta family. Heterohexamer of two alpha and four beta subunits.

It is found in the cytoplasm. Molecular chaperone capable of stabilizing a range of proteins. Seems to fulfill an ATP-independent, HSP70-like function in archaeal de novo protein folding. This Methanocaldococcus jannaschii (strain ATCC 43067 / DSM 2661 / JAL-1 / JCM 10045 / NBRC 100440) (Methanococcus jannaschii) protein is Prefoldin subunit beta (pfdB).